Consider the following 595-residue polypeptide: Potassium-transporting ATPase potassium-binding subunit (595 aa).

A run of 10 helical transmembrane segments spans residues 9-29 (ICGYLGVLLALAKPLGSYMAA), 63-83 (TGYASAFLVFNLLGVLAVYAL), 135-155 (GLTVQNFVSAASGMAVLVALI), 177-197 (ILHILLPLSFLLALLLIGQGV), 285-305 (FLEMLAILVISGALCHTFGVM), 312-332 (GWVILAAMTLIFVPLLFVTVL), 412-432 (GLYGMLVFAIVAVFVAGLMIG), 451-471 (AIVILVPPLMVLGGTAVAVML), 516-536 (LMLGLAMWFSRYWLAVPVLAI), and 560-580 (FVGLLVGVVIIVGALTFIPAL).

Belongs to the KdpA family. As to quaternary structure, the system is composed of three essential subunits: KdpA, KdpB and KdpC.

The protein localises to the cell inner membrane. Its function is as follows. Part of the high-affinity ATP-driven potassium transport (or Kdp) system, which catalyzes the hydrolysis of ATP coupled with the electrogenic transport of potassium into the cytoplasm. This subunit binds the periplasmic potassium ions and delivers the ions to the membrane domain of KdpB through an intramembrane tunnel. The protein is Potassium-transporting ATPase potassium-binding subunit of Methylococcus capsulatus (strain ATCC 33009 / NCIMB 11132 / Bath).